A 68-amino-acid chain; its full sequence is MSKRYAVILAAGQGTRMKSSLYKVLHPVCGKPMVQHVIDQLSRLDLTNLITVVGHGAEKVKSHVGDKS.

UDP-N-acetyl-alpha-D-glucosamine contacts are provided by residues 9-12 (LAAG) and lysine 23.

This sequence in the N-terminal section; belongs to the N-acetylglucosamine-1-phosphate uridyltransferase family. The protein in the C-terminal section; belongs to the transferase hexapeptide repeat family. As to quaternary structure, homotrimer. It depends on Mg(2+) as a cofactor.

It localises to the cytoplasm. The enzyme catalyses alpha-D-glucosamine 1-phosphate + acetyl-CoA = N-acetyl-alpha-D-glucosamine 1-phosphate + CoA + H(+). The catalysed reaction is N-acetyl-alpha-D-glucosamine 1-phosphate + UTP + H(+) = UDP-N-acetyl-alpha-D-glucosamine + diphosphate. Its pathway is nucleotide-sugar biosynthesis; UDP-N-acetyl-alpha-D-glucosamine biosynthesis; N-acetyl-alpha-D-glucosamine 1-phosphate from alpha-D-glucosamine 6-phosphate (route II): step 2/2. It participates in nucleotide-sugar biosynthesis; UDP-N-acetyl-alpha-D-glucosamine biosynthesis; UDP-N-acetyl-alpha-D-glucosamine from N-acetyl-alpha-D-glucosamine 1-phosphate: step 1/1. The protein operates within bacterial outer membrane biogenesis; LPS lipid A biosynthesis. Catalyzes the last two sequential reactions in the de novo biosynthetic pathway for UDP-N-acetylglucosamine (UDP-GlcNAc). The C-terminal domain catalyzes the transfer of acetyl group from acetyl coenzyme A to glucosamine-1-phosphate (GlcN-1-P) to produce N-acetylglucosamine-1-phosphate (GlcNAc-1-P), which is converted into UDP-GlcNAc by the transfer of uridine 5-monophosphate (from uridine 5-triphosphate), a reaction catalyzed by the N-terminal domain. The protein is Bifunctional protein GlmU (glmU) of Priestia megaterium (Bacillus megaterium).